The following is a 262-amino-acid chain: Protein N-terminal and lysine N-methyltransferase EFM7 (262 aa).

Residues tryptophan 59, 86–88, aspartate 108, tryptophan 143, and serine 171 each bind S-adenosyl-L-methionine; that span reads GAA.

The protein belongs to the class I-like SAM-binding methyltransferase superfamily. EFM7 family.

It is found in the cytoplasm. In terms of biological role, S-adenosyl-L-methionine-dependent protein methyltransferase that trimethylates the N-terminal glycine 'Gly-2' of elongation factor 1-alpha, before also catalyzing the mono- and dimethylation of 'Lys-3'. This is Protein N-terminal and lysine N-methyltransferase EFM7 from Candida albicans (strain SC5314 / ATCC MYA-2876) (Yeast).